Here is a 271-residue protein sequence, read N- to C-terminus: Insulin-like growth factor-binding protein 5 (271 aa).

The N-terminal stretch at 1–19 (MVLTAVLLLLAACAGPAQG) is a signal peptide. The IGFBP N-terminal domain occupies 22 to 102 (SFVHCEPCDE…LHGRGVCLNE (81 aa)). Disulfide bonds link C26–C52, C29–C54, C37–C55, C44–C58, C66–C79, and C73–C99. Residues 109–121 (AKIERDSREHEEP) show a composition bias toward basic and acidic residues. The segment at 109–129 (AKIERDSREHEEPTTSEMAEE) is disordered. At S115 the chain carries Phosphoserine. In terms of domain architecture, Thyroglobulin type-1 spans 188–262 (QGPCRRHMEA…MEYVDGDFQC (75 aa)). 3 cysteine pairs are disulfide-bonded: C191-C218, C229-C240, and C242-C262.

As to quaternary structure, interacts with IGF1; this interaction enhances the growth stimulatory effects of IGF1 on fibroblasts. Interacts with CAV1; this interaction allows trafficking of IGFBP5 from the plasma membrane to the nucleus. Interacts with NCL; this interaction is necessary for IGFBP5 localization to the nucleus.

The protein localises to the secreted. It localises to the cytoplasm. Its subcellular location is the nucleus. Its function is as follows. Multifunctional protein that plays a critical role in regulating the availability of IGFs to their receptors and thereby regulates IGF-mediated cellular processes including proliferation, differentiation, and apoptosis in a cell-type specific manner. Increases the cell proliferation of osteoblasts, intestinal smooth muscle cells and neuroblastoma cells. Enhances adhesion and survival of epithelial cells but decreases adhesion of mesenchymal cells. Once secreted, acts as a major mediator of mTORC1-dependent feedback inhibition of IGF1 signaling. Also plays a role in the induction of extracellular matrix (ECM) production and deposition independently of its nuclear translocation and binding to IGFs. Acts itself as a growth factor that can act independently of IGFs to regulate bone formation. Acts as a ligand for the ROR1 receptor which triggers formation of ROR1/HER2 heterodimer to enhance CREB oncogenic signaling. The protein is Insulin-like growth factor-binding protein 5 (IGFBP5) of Sus scrofa (Pig).